The chain runs to 159 residues: SsrA-binding protein (159 aa).

It belongs to the SmpB family.

The protein localises to the cytoplasm. Its function is as follows. Required for rescue of stalled ribosomes mediated by trans-translation. Binds to transfer-messenger RNA (tmRNA), required for stable association of tmRNA with ribosomes. tmRNA and SmpB together mimic tRNA shape, replacing the anticodon stem-loop with SmpB. tmRNA is encoded by the ssrA gene; the 2 termini fold to resemble tRNA(Ala) and it encodes a 'tag peptide', a short internal open reading frame. During trans-translation Ala-aminoacylated tmRNA acts like a tRNA, entering the A-site of stalled ribosomes, displacing the stalled mRNA. The ribosome then switches to translate the ORF on the tmRNA; the nascent peptide is terminated with the 'tag peptide' encoded by the tmRNA and targeted for degradation. The ribosome is freed to recommence translation, which seems to be the essential function of trans-translation. In Saccharophagus degradans (strain 2-40 / ATCC 43961 / DSM 17024), this protein is SsrA-binding protein.